The chain runs to 516 residues: Coiled-coil domain-containing protein 82 (516 aa).

A compositionally biased stretch (basic residues) spans Met1–Ser13. Residues Met1–Asp265 form a disordered region. The span at Asp38 to Asp62 shows a compositional bias: acidic residues. A compositionally biased stretch (basic and acidic residues) spans Ile78 to Asn96. Positions Lys98 to Ser107 are enriched in polar residues. The span at Met113 to His135 shows a compositional bias: basic and acidic residues. Ser170 and Ser194 each carry phosphoserine. Thr202 carries the post-translational modification Phosphothreonine. The stretch at Glu204–Asn232 forms a coiled coil. Residues His215–Arg226 show a composition bias toward basic and acidic residues. Over residues Thr248–Asp265 the composition is skewed to acidic residues. Position 301 is a phosphoserine (Ser301).

The chain is Coiled-coil domain-containing protein 82 (Ccdc82) from Rattus norvegicus (Rat).